The following is a 177-amino-acid chain: Nucleoside triphosphate/diphosphate phosphatase (177 aa).

The active-site Proton donor is the Arg23. Mg(2+) contacts are provided by Asn87, Asp103, Asp105, Asp107, Asp120, and Glu123.

Belongs to the Ntdp family. Mg(2+) is required as a cofactor.

The catalysed reaction is a ribonucleoside 5'-triphosphate + H2O = a ribonucleoside 5'-diphosphate + phosphate + H(+). It catalyses the reaction a ribonucleoside 5'-diphosphate + H2O = a ribonucleoside 5'-phosphate + phosphate + H(+). Its function is as follows. Has nucleoside phosphatase activity towards nucleoside triphosphates and nucleoside diphosphates. In Streptococcus agalactiae serotype Ia (strain ATCC 27591 / A909 / CDC SS700), this protein is Nucleoside triphosphate/diphosphate phosphatase.